The following is a 130-amino-acid chain: Glycine cleavage system H protein (130 aa).

Residues 25 to 106 enclose the Lipoyl-binding domain; sequence VALIGITDFA…PFDTWMVKLK (82 aa). Lysine 66 is modified (N6-lipoyllysine).

This sequence belongs to the GcvH family. The glycine cleavage system is composed of four proteins: P, T, L and H. (R)-lipoate is required as a cofactor.

Its function is as follows. The glycine cleavage system catalyzes the degradation of glycine. The H protein shuttles the methylamine group of glycine from the P protein to the T protein. This Leptospira biflexa serovar Patoc (strain Patoc 1 / Ames) protein is Glycine cleavage system H protein.